The sequence spans 218 residues: Thiopurine S-methyltransferase (218 aa).

4 residues coordinate S-adenosyl-L-methionine: tryptophan 10, leucine 45, glutamate 66, and arginine 123.

The protein belongs to the class I-like SAM-binding methyltransferase superfamily. TPMT family.

It is found in the cytoplasm. The catalysed reaction is S-adenosyl-L-methionine + a thiopurine = S-adenosyl-L-homocysteine + a thiopurine S-methylether.. This is Thiopurine S-methyltransferase from Shewanella sp. (strain W3-18-1).